A 291-amino-acid chain; its full sequence is tRNA pseudouridine synthase B (291 aa).

The active-site Nucleophile is D41.

The protein belongs to the pseudouridine synthase TruB family. Type 1 subfamily.

The catalysed reaction is uridine(55) in tRNA = pseudouridine(55) in tRNA. In terms of biological role, responsible for synthesis of pseudouridine from uracil-55 in the psi GC loop of transfer RNAs. The chain is tRNA pseudouridine synthase B from Parasynechococcus marenigrum (strain WH8102).